A 373-amino-acid chain; its full sequence is 8-amino-7-oxononanoate synthase (373 aa).

Substrate is bound at residue Arg-16. Pyridoxal 5'-phosphate is bound at residue Gly-93–Phe-94. His-118 serves as a coordination point for substrate. Pyridoxal 5'-phosphate contacts are provided by residues Ser-165, Asp-190–His-193, and Thr-222–Lys-225. Lys-225 is subject to N6-(pyridoxal phosphate)lysine. Thr-334 lines the substrate pocket.

It belongs to the class-II pyridoxal-phosphate-dependent aminotransferase family. BioF subfamily. In terms of assembly, homodimer. The cofactor is pyridoxal 5'-phosphate.

The catalysed reaction is 6-carboxyhexanoyl-[ACP] + L-alanine + H(+) = (8S)-8-amino-7-oxononanoate + holo-[ACP] + CO2. It participates in cofactor biosynthesis; biotin biosynthesis. Functionally, catalyzes the decarboxylative condensation of pimeloyl-[acyl-carrier protein] and L-alanine to produce 8-amino-7-oxononanoate (AON), [acyl-carrier protein], and carbon dioxide. This Helicobacter pylori (strain J99 / ATCC 700824) (Campylobacter pylori J99) protein is 8-amino-7-oxononanoate synthase.